The following is a 285-amino-acid chain: OPEP-3 protein (285 aa).

The protein is OPEP-3 protein (OPEP-3) of Orgyia pseudotsugata multicapsid polyhedrosis virus (OpMNPV).